We begin with the raw amino-acid sequence, 426 residues long: Serine--tRNA ligase (426 aa).

Residue 231-233 participates in L-serine binding; the sequence is TSE. Position 262-264 (262-264) interacts with ATP; sequence RSE. Glu285 lines the L-serine pocket. 349 to 352 contributes to the ATP binding site; sequence EISS. Ser385 contributes to the L-serine binding site.

This sequence belongs to the class-II aminoacyl-tRNA synthetase family. Type-1 seryl-tRNA synthetase subfamily. Homodimer. The tRNA molecule binds across the dimer.

It localises to the cytoplasm. It carries out the reaction tRNA(Ser) + L-serine + ATP = L-seryl-tRNA(Ser) + AMP + diphosphate + H(+). It catalyses the reaction tRNA(Sec) + L-serine + ATP = L-seryl-tRNA(Sec) + AMP + diphosphate + H(+). It functions in the pathway aminoacyl-tRNA biosynthesis; selenocysteinyl-tRNA(Sec) biosynthesis; L-seryl-tRNA(Sec) from L-serine and tRNA(Sec): step 1/1. Catalyzes the attachment of serine to tRNA(Ser). Is also able to aminoacylate tRNA(Sec) with serine, to form the misacylated tRNA L-seryl-tRNA(Sec), which will be further converted into selenocysteinyl-tRNA(Sec). This is Serine--tRNA ligase from Legionella pneumophila subsp. pneumophila (strain Philadelphia 1 / ATCC 33152 / DSM 7513).